A 189-amino-acid polypeptide reads, in one-letter code: Protein GrpE (189 aa).

The segment covering 1–12 has biased composition (basic residues); sequence MDKKKHGSHAGA. Residues 1 to 36 are disordered; that stretch reads MDKKKHGSHAGAHHTDEPAAETVAPAAEGAPAAADR. The span at 20 to 34 shows a compositional bias: low complexity; it reads AETVAPAAEGAPAAA.

It belongs to the GrpE family. In terms of assembly, homodimer.

The protein localises to the cytoplasm. Participates actively in the response to hyperosmotic and heat shock by preventing the aggregation of stress-denatured proteins, in association with DnaK and GrpE. It is the nucleotide exchange factor for DnaK and may function as a thermosensor. Unfolded proteins bind initially to DnaJ; upon interaction with the DnaJ-bound protein, DnaK hydrolyzes its bound ATP, resulting in the formation of a stable complex. GrpE releases ADP from DnaK; ATP binding to DnaK triggers the release of the substrate protein, thus completing the reaction cycle. Several rounds of ATP-dependent interactions between DnaJ, DnaK and GrpE are required for fully efficient folding. The polypeptide is Protein GrpE (Geobacter metallireducens (strain ATCC 53774 / DSM 7210 / GS-15)).